Consider the following 274-residue polypeptide: MDSAEKKLDLSPIELAKRLACHMAVDENYPENPKVIGIGSGSTVVYVVERLLTKPGVDSVVFIPTGFQSKQLIVNNGLRLGDPDCYPNVDVSFDGADEVDDNLQCIKGGGACLFQEKLIAFLAKRLVIVADSRKNSHVLGEYWKKGVPIEVMPMAYASILPQLVELGAIEPKLRMGAPGKAGPVVTDNGNFIIDAHFGLIKNPKELFAKIKLLVGVVEVGLFCDMISAVYFGSKDGSVTVKKASGEKHIIPAPVTAAANEVDAKVAETNAKPLN.

It belongs to the ribose 5-phosphate isomerase family.

Its subcellular location is the cytoplasm. It carries out the reaction aldehydo-D-ribose 5-phosphate = D-ribulose 5-phosphate. Its pathway is carbohydrate degradation; pentose phosphate pathway; D-ribose 5-phosphate from D-ribulose 5-phosphate (non-oxidative stage): step 1/1. This chain is Ribose-5-phosphate isomerase (rki1), found in Schizosaccharomyces pombe (strain 972 / ATCC 24843) (Fission yeast).